The chain runs to 552 residues: Probable ABC transporter ATP-binding/permease protein HI_0664 (552 aa).

The next 6 membrane-spanning stretches (helical) occupy residues 22–42 (IMAF…FIMV), 52–72 (LNFD…VLAV), 139–159 (IAPI…FAQL), 162–182 (WFVL…PIIT), 253–273 (EVAV…LFSL), and 278–298 (FAAF…VIAL). The ABC transmembrane type-1 domain maps to 23-307 (MAFTITMGTL…LSNLSSNLLQ (285 aa)). The 213-residue stretch at 340-552 (IDVENVNFAY…VIGIENGRMS (213 aa)) folds into the ABC transporter domain. Residue 372–379 (GRSGSGKS) coordinates ATP.

Belongs to the ABC transporter superfamily. Lipid exporter (TC 3.A.1.106) family.

The protein resides in the cell inner membrane. This Haemophilus influenzae (strain ATCC 51907 / DSM 11121 / KW20 / Rd) protein is Probable ABC transporter ATP-binding/permease protein HI_0664.